The sequence spans 985 residues: Alpha-glucosidase (985 aa).

Positions 1-25 (MAGLKSFLASSWLLPVACGASQSIV) are cleaved as a signal peptide. 6 N-linked (GlcNAc...) asparagine glycosylation sites follow: asparagine 126, asparagine 145, asparagine 220, asparagine 255, asparagine 349, and asparagine 424. The Nucleophile role is filled by aspartate 492. Residue glutamate 495 is part of the active site. Residues asparagine 508, asparagine 536, asparagine 539, asparagine 602, and asparagine 624 are each glycosylated (N-linked (GlcNAc...) asparagine). Aspartate 660 (proton donor) is an active-site residue. N-linked (GlcNAc...) asparagine glycosylation is found at asparagine 661, asparagine 835, asparagine 881, asparagine 929, and asparagine 957.

This sequence belongs to the glycosyl hydrolase 31 family.

It carries out the reaction Hydrolysis of terminal, non-reducing (1-&gt;4)-linked alpha-D-glucose residues with release of alpha-D-glucose.. Functionally, hydrolyzes malto-oligosaccharides, but has a low activity toward soluble starch. This Aspergillus oryzae (strain ATCC 42149 / RIB 40) (Yellow koji mold) protein is Alpha-glucosidase (agdA).